The sequence spans 84 residues: Large ribosomal subunit protein bL27 (84 aa).

The disordered stretch occupies residues 1–21; sequence MAHKKAGGSTRNGRDSNPKYL.

It belongs to the bacterial ribosomal protein bL27 family.

This chain is Large ribosomal subunit protein bL27, found in Francisella tularensis subsp. holarctica (strain FTNF002-00 / FTA).